Consider the following 356-residue polypeptide: Glutamine synthetase nodule isozyme (356 aa).

Residues 19-99 (IIAEYIWVGG…VICDVYTPAG (81 aa)) enclose the GS beta-grasp domain. In terms of domain architecture, GS catalytic spans 106–356 (KRHNAAKIFS…IAETTLLWKP (251 aa)).

It belongs to the glutamine synthetase family. Homooctamer. As to expression, found at highest levels in root nodules.

The protein localises to the cytoplasm. The enzyme catalyses L-glutamate + NH4(+) + ATP = L-glutamine + ADP + phosphate + H(+). The chain is Glutamine synthetase nodule isozyme (GS1) from Medicago sativa (Alfalfa).